A 302-amino-acid chain; its full sequence is L-threonate dehydrogenase (302 aa).

Residues 7-35 (FHVG…TWGA) and T102 each bind NAD(+). The active site involves K178. K246 is an NAD(+) binding site.

The protein belongs to the HIBADH-related family. L-threonate dehydrogenase subfamily.

The catalysed reaction is L-threonate + NAD(+) = 2-dehydro-L-erythronate + NADH + H(+). Functionally, catalyzes oxidation of L-threonate to 2-oxo-tetronate. Can use either NAD(+) or NADP(+) as cosubstrate, with a preference for NAD(+). This is L-threonate dehydrogenase from Escherichia coli (strain K12).